Consider the following 234-residue polypeptide: Nuclear ubiquitous casein and cyclin-dependent kinase substrate 1 (234 aa).

The segment at 1 to 234 (MSRPVRNRKV…SEDEASSGED (234 aa)) is disordered. Tyrosine 13 is modified (phosphotyrosine). A phosphoserine mark is found at serine 14 and serine 19. The residue at position 26 (tyrosine 26) is a Phosphotyrosine. A compositionally biased stretch (basic residues) spans 35–51 (KKIRSSPREAKNKRRSG). Serine 54, serine 58, serine 61, serine 73, serine 75, and serine 79 each carry phosphoserine. Basic and acidic residues predominate over residues 64–77 (KDVKTKKDDSHSAE). The span at 91–100 (QQRQAASKAA) shows a compositional bias: low complexity. Residues 111 to 124 (VGSEEEPEEDDEAP) are compositionally biased toward acidic residues. Residues serine 113, serine 130, serine 132, and serine 144 each carry the phosphoserine modification. The segment covering 132–145 (SDEDFLMEDDDDSD) has biased composition (acidic residues). A compositionally biased stretch (basic residues) spans 149–174 (SKKKNKKMVKKSKPERKEKKMPKPRL). Threonine 179 is modified (phosphothreonine). At serine 181 the chain carries Phosphoserine. The segment covering 185-199 (GKAKVGRPTASKKSK) has biased composition (basic residues). Threonine 202 is subject to Phosphothreonine. A phosphoserine mark is found at serine 204, serine 214, serine 225, and serine 231. The span at 223–234 (EGSEDEASSGED) shows a compositional bias: acidic residues.

Does not interact with RAD51. Phosphorylated in an ATM-dependent manner in response to DNA damage. Phosphorylated by CDK1 and casein kinase.

The protein resides in the nucleus. It is found in the chromosome. Chromatin-associated protein involved in DNA repair by promoting homologous recombination (HR). Binds double-stranded DNA (dsDNA) and secondary DNA structures, such as D-loop structures, but with less affinity than RAD51AP1. The sequence is that of Nuclear ubiquitous casein and cyclin-dependent kinase substrate 1 (Nucks1) from Mus musculus (Mouse).